Reading from the N-terminus, the 388-residue chain is LL-diaminopimelate aminotransferase (388 aa).

Tyr16 and Gly41 together coordinate substrate. Pyridoxal 5'-phosphate contacts are provided by residues Tyr70, 104-105 (SK), Tyr129, Asn179, Tyr210, and 239-241 (SLS). Residues Lys105, Tyr129, and Asn179 each contribute to the substrate site. N6-(pyridoxal phosphate)lysine is present on Lys242. Arg250 lines the pyridoxal 5'-phosphate pocket. Arg368 provides a ligand contact to substrate.

Belongs to the class-I pyridoxal-phosphate-dependent aminotransferase family. LL-diaminopimelate aminotransferase subfamily. Homodimer. It depends on pyridoxal 5'-phosphate as a cofactor.

The enzyme catalyses (2S,6S)-2,6-diaminopimelate + 2-oxoglutarate = (S)-2,3,4,5-tetrahydrodipicolinate + L-glutamate + H2O + H(+). Its pathway is amino-acid biosynthesis; L-lysine biosynthesis via DAP pathway; LL-2,6-diaminopimelate from (S)-tetrahydrodipicolinate (aminotransferase route): step 1/1. Its function is as follows. Involved in the synthesis of meso-diaminopimelate (m-DAP or DL-DAP), required for both lysine and peptidoglycan biosynthesis. Catalyzes the direct conversion of tetrahydrodipicolinate to LL-diaminopimelate. In Nitratidesulfovibrio vulgaris (strain ATCC 29579 / DSM 644 / CCUG 34227 / NCIMB 8303 / VKM B-1760 / Hildenborough) (Desulfovibrio vulgaris), this protein is LL-diaminopimelate aminotransferase.